A 492-amino-acid chain; its full sequence is uncharacterized protein (492 aa).

12 consecutive transmembrane segments (helical) span residues 16–36, 39–59, 107–127, 133–153, 162–182, 210–230, 243–263, 291–311, 350–370, 394–414, 429–449, and 454–474; these read FIAF…VMTM, VGPF…GVVL, SFNG…IPVV, IIIG…FISL, AIFY…ILGI, IIFI…LASI, FLIA…IISG, LVGG…NSLA, VLIS…IPFL, MAAA…FMIF, VSYV…LFPF, and VFNT…VGFF.

To M.genitalium MG225.

It localises to the cell membrane. This is an uncharacterized protein from Mycoplasma genitalium (strain ATCC 33530 / DSM 19775 / NCTC 10195 / G37) (Mycoplasmoides genitalium).